The primary structure comprises 150 residues: D-aminoacyl-tRNA deacylase (150 aa).

The short motif at 140 to 141 (GP) is the Gly-cisPro motif, important for rejection of L-amino acids element.

It belongs to the DTD family. Homodimer.

The protein localises to the cytoplasm. The catalysed reaction is glycyl-tRNA(Ala) + H2O = tRNA(Ala) + glycine + H(+). The enzyme catalyses a D-aminoacyl-tRNA + H2O = a tRNA + a D-alpha-amino acid + H(+). Functionally, an aminoacyl-tRNA editing enzyme that deacylates mischarged D-aminoacyl-tRNAs. Also deacylates mischarged glycyl-tRNA(Ala), protecting cells against glycine mischarging by AlaRS. Acts via tRNA-based rather than protein-based catalysis; rejects L-amino acids rather than detecting D-amino acids in the active site. By recycling D-aminoacyl-tRNA to D-amino acids and free tRNA molecules, this enzyme counteracts the toxicity associated with the formation of D-aminoacyl-tRNA entities in vivo and helps enforce protein L-homochirality. The polypeptide is D-aminoacyl-tRNA deacylase (DTD1) (Eremothecium gossypii (strain ATCC 10895 / CBS 109.51 / FGSC 9923 / NRRL Y-1056) (Yeast)).